The sequence spans 62 residues: UPF0337 protein gsr0040 (62 aa).

Basic and acidic residues-rich tracts occupy residues 1–15 (MGID…KDVQ) and 27–62 (DDPK…IDNV). A disordered region spans residues 1 to 62 (MGIDKRAEAT…DQAHRTIDNV (62 aa)).

Belongs to the UPF0337 (CsbD) family.

This is UPF0337 protein gsr0040 from Gloeobacter violaceus (strain ATCC 29082 / PCC 7421).